A 208-amino-acid chain; its full sequence is Flavin-dependent thymidylate synthase (208 aa).

Positions 1-208 constitute a ThyX domain; that stretch reads MEVICKHYTP…QYLFEDCLKH (208 aa). FAD is bound by residues S50 and 74–76; that span reads RHR. Residues 71–74, 84–86, and K147 each bind dUMP; these read ELSR and SSR. Residues 74 to 84 carry the ThyX motif motif; that stretch reads RHRIASLSVKS. Residues 163-165 and N169 each bind FAD; that span reads NAR. A dUMP-binding site is contributed by R174. Catalysis depends on R174, which acts as the Involved in ionization of N3 of dUMP, leading to its activation.

Belongs to the thymidylate synthase ThyX family. In terms of assembly, homotetramer. It depends on FAD as a cofactor.

It carries out the reaction dUMP + (6R)-5,10-methylene-5,6,7,8-tetrahydrofolate + NADPH + H(+) = dTMP + (6S)-5,6,7,8-tetrahydrofolate + NADP(+). Its pathway is pyrimidine metabolism; dTTP biosynthesis. In terms of biological role, catalyzes the reductive methylation of 2'-deoxyuridine-5'-monophosphate (dUMP) to 2'-deoxythymidine-5'-monophosphate (dTMP) while utilizing 5,10-methylenetetrahydrofolate (mTHF) as the methyl donor, and NADPH and FADH(2) as the reductant. In Helicobacter pylori (strain J99 / ATCC 700824) (Campylobacter pylori J99), this protein is Flavin-dependent thymidylate synthase.